An 885-amino-acid polypeptide reads, in one-letter code: Leucine--tRNA ligase (885 aa).

Positions 43-53 (PYTSGQLHMGH) match the 'HIGH' region motif. The 'KMSKS' region motif lies at 571 to 575 (KMSKS). Position 574 (K574) interacts with ATP. A disordered region spans residues 866-885 (SVANKAEPGRPAIHVDEADD).

The protein belongs to the class-I aminoacyl-tRNA synthetase family.

The protein resides in the cytoplasm. It catalyses the reaction tRNA(Leu) + L-leucine + ATP = L-leucyl-tRNA(Leu) + AMP + diphosphate. This is Leucine--tRNA ligase from Halobacterium salinarum (strain ATCC 700922 / JCM 11081 / NRC-1) (Halobacterium halobium).